The chain runs to 96 residues: uncharacterized protein (96 aa).

This is an uncharacterized protein from Bacillus subtilis (strain 168).